Here is a 223-residue protein sequence, read N- to C-terminus: Small ribosomal subunit protein uS3 (223 aa).

The region spanning 39–107 (VREFLHKKLA…PVQINIEEVR (69 aa)) is the KH type-2 domain.

It belongs to the universal ribosomal protein uS3 family. Part of the 30S ribosomal subunit. Forms a tight complex with proteins S10 and S14.

In terms of biological role, binds the lower part of the 30S subunit head. Binds mRNA in the 70S ribosome, positioning it for translation. The protein is Small ribosomal subunit protein uS3 of Francisella tularensis subsp. novicida (strain U112).